Consider the following 89-residue polypeptide: Putative regulatory protein BPUM_1466 (89 aa).

This sequence belongs to the RemA family.

In Bacillus pumilus (strain SAFR-032), this protein is Putative regulatory protein BPUM_1466.